Here is a 633-residue protein sequence, read N- to C-terminus: Chaperone protein HtpG (633 aa).

Residues 1-344 are a; substrate-binding; sequence MSLQPQAETL…SNDLPLNISR (344 aa). Residues 345–560 are b; that stretch reads ELLQSNEVIN…ENEMSGHLQR (216 aa). Residues 561–633 form a c region; it reads LLIQTGQDFM…KGLNELLLDS (73 aa).

It belongs to the heat shock protein 90 family. As to quaternary structure, homodimer.

The protein resides in the cytoplasm. In terms of biological role, molecular chaperone. Has ATPase activity. This is Chaperone protein HtpG from Coxiella burnetii (strain RSA 331 / Henzerling II).